The primary structure comprises 336 residues: Ribosomal RNA large subunit methyltransferase F (336 aa).

It belongs to the methyltransferase superfamily. METTL16/RlmF family.

Its subcellular location is the cytoplasm. The catalysed reaction is adenosine(1618) in 23S rRNA + S-adenosyl-L-methionine = N(6)-methyladenosine(1618) in 23S rRNA + S-adenosyl-L-homocysteine + H(+). In terms of biological role, specifically methylates the adenine in position 1618 of 23S rRNA. The polypeptide is Ribosomal RNA large subunit methyltransferase F (Yersinia pestis (strain Pestoides F)).